The chain runs to 93 residues: MAELARAHILVSGEVQGVSFRAAAVDEARRLGVRGWVRNVADGRVEAEAEGERAKVEALVRWCGRGPPAARVADVQVSWGAYGGDLGPFSVRH.

Residues 6–93 (RAHILVSGEV…GDLGPFSVRH (88 aa)) form the Acylphosphatase-like domain. Residues Arg21 and Asn39 contribute to the active site.

The protein belongs to the acylphosphatase family.

It catalyses the reaction an acyl phosphate + H2O = a carboxylate + phosphate + H(+). In Anaeromyxobacter sp. (strain Fw109-5), this protein is Acylphosphatase (acyP).